Reading from the N-terminus, the 338-residue chain is MAASRIAVDAMGGDNAPEAVVEGAIQALHQTEGELSVLLVGPEEQLHGLLASRPEAPEERLRIVDAPEAIGMGETPSTAVKQKPNSSIHQGLAAHHDDHADAFVSAGNTGAIMAASMFILQRIPGVERPSIAGFFPTLKGSSVVLDIGSNVDCKPAHLLQFARMGTVYARQVLKTDPPSVGLLNIGEEPGKGNEQVKAAHELLRDADDVHFVGNVEGGDLLFYAADIIICDGFVGNALLKFGESMSTVLSDMCQQEMERQGLAPDEQKLVAGVLDEVREGFDPEALGGAPLLGVNGNVLVGHGRSTADVIAQMIHSARTIATENVAHALEEAFQSSSA.

It belongs to the PlsX family. Homodimer. Probably interacts with PlsY.

The protein resides in the cytoplasm. It catalyses the reaction a fatty acyl-[ACP] + phosphate = an acyl phosphate + holo-[ACP]. The protein operates within lipid metabolism; phospholipid metabolism. Catalyzes the reversible formation of acyl-phosphate (acyl-PO(4)) from acyl-[acyl-carrier-protein] (acyl-ACP). This enzyme utilizes acyl-ACP as fatty acyl donor, but not acyl-CoA. This Salinibacter ruber (strain DSM 13855 / M31) protein is Phosphate acyltransferase.